The sequence spans 300 residues: Formyltetrahydrofolate deformylase (300 aa).

Residues 21–102 form the ACT domain; sequence RLLVSCPDQP…MTWSLTLASE (82 aa). Asp-244 is a catalytic residue.

This sequence belongs to the PurU family.

The catalysed reaction is (6R)-10-formyltetrahydrofolate + H2O = (6S)-5,6,7,8-tetrahydrofolate + formate + H(+). It participates in purine metabolism; IMP biosynthesis via de novo pathway; formate from 10-formyl-5,6,7,8-tetrahydrofolate: step 1/1. Functionally, catalyzes the hydrolysis of 10-formyltetrahydrofolate (formyl-FH4) to formate and tetrahydrofolate (FH4). The polypeptide is Formyltetrahydrofolate deformylase (Bacillus subtilis (strain 168)).